Here is a 515-residue protein sequence, read N- to C-terminus: Maturase K (515 aa).

It belongs to the intron maturase 2 family. MatK subfamily.

The protein resides in the plastid. Its subcellular location is the chloroplast. Functionally, usually encoded in the trnK tRNA gene intron. Probably assists in splicing its own and other chloroplast group II introns. This chain is Maturase K, found in Pinus sibirica (Siberian pine).